The primary structure comprises 119 residues: Large ribosomal subunit protein uL22 (119 aa).

The protein belongs to the universal ribosomal protein uL22 family. Part of the 50S ribosomal subunit.

Its function is as follows. This protein binds specifically to 23S rRNA; its binding is stimulated by other ribosomal proteins, e.g. L4, L17, and L20. It is important during the early stages of 50S assembly. It makes multiple contacts with different domains of the 23S rRNA in the assembled 50S subunit and ribosome. The globular domain of the protein is located near the polypeptide exit tunnel on the outside of the subunit, while an extended beta-hairpin is found that lines the wall of the exit tunnel in the center of the 70S ribosome. This Rickettsia conorii (strain ATCC VR-613 / Malish 7) protein is Large ribosomal subunit protein uL22.